Reading from the N-terminus, the 329-residue chain is rRNA 2'-O-methyltransferase fibrillarin (329 aa).

Residues 1–85 form a disordered region; sequence MAFGAPRGRG…GGARGGARGG (85 aa). Positions 13–84 are enriched in gly residues; the sequence is RGGFGGRGGS…RGGARGGARG (72 aa). Residues 181–182, 200–201, 225–226, and 245–248 contribute to the S-adenosyl-L-methionine site; these read TS, EF, DA, and DVAQ.

This sequence belongs to the methyltransferase superfamily. Fibrillarin family. In terms of assembly, component of box C/D small nucleolar ribonucleoprotein (snoRNP) particles that contain SNU13, NOP1, SIK1/NOP56 and NOP58, plus a guide RNA. Post-translationally, by homology to other fibrillarins, some or all of the N-terminal domain arginines are modified to asymmetric dimethylarginine (DMA).

The protein localises to the nucleus. It localises to the nucleolus. It catalyses the reaction L-glutaminyl-[histone H2A] + S-adenosyl-L-methionine = N(5)-methyl-L-glutaminyl-[histone H2A] + S-adenosyl-L-homocysteine + H(+). Functionally, S-adenosyl-L-methionine-dependent methyltransferase that has the ability to methylate both RNAs and proteins. Involved in pre-rRNA processing. Utilizes the methyl donor S-adenosyl-L-methionine to catalyze the site-specific 2'-hydroxyl methylation of ribose moieties in pre-ribosomal RNA. Site specificity is provided by a guide RNA that base pairs with the substrate. Methylation occurs at a characteristic distance from the sequence involved in base pairing with the guide RNA. Also acts as a protein methyltransferase by mediating methylation of 'Gln-105' of histone H2A (H2AQ105me), a modification that impairs binding of the FACT complex and is specifically present at 35S ribosomal DNA locus. The protein is rRNA 2'-O-methyltransferase fibrillarin (NOP1) of Debaryomyces hansenii (strain ATCC 36239 / CBS 767 / BCRC 21394 / JCM 1990 / NBRC 0083 / IGC 2968) (Yeast).